The sequence spans 447 residues: Blue-light photoreceptor PHR2 (447 aa).

Polar residues predominate over residues 1 to 14 (MDSSNVEENLNPET). Residues 1–20 (MDSSNVEENLNPETKSAEEQ) form a disordered region. Positions 115–249 (RAAVVWFRND…EVKYFWGSTL (135 aa)) constitute a Photolyase/cryptochrome alpha/beta domain.

The protein belongs to the DNA photolyase class-1 family. Requires FAD as cofactor.

This is Blue-light photoreceptor PHR2 (PHR2) from Arabidopsis thaliana (Mouse-ear cress).